Consider the following 627-residue polypeptide: MSVISIMPLASKPCLNKSFISSTHEPKALRRPISTVGLCRRAKSVTASMSMSSSTAVSDDGVQRRIGNHHSNLWDDNFIQSLSSPYGPSSYGERAERLIGEVKEIFNRISMANGELVSHVDDLLQHLSMVDNVERLGIDRHFQTEIKVSLDYVYSYWSEKGIGPGRDIVCADLNTTALGFRVLRLHGYTVFPDVFEQFKDQMGRIACSANQTERQISSILNLFRASLIAFPWEKVMEEAEIFSTAYLKEALQTIPVSSLSREIQYVLDYRWHSDLPRLETRTYIDILRENATNETLDMKTEKLLELAKVEFNIFNSLQQNELKCVSRWWKESGSPDLTFIRHRQVEFYTLVSGIDMEPKRSTFRINFVKICHFVTILDDMYDTFGTIDELRLFTAAVTRWDKSATECLPEYMKGVYIDLYETVNELAREAHKSQGRDTLNYAREALEDYLGSYLKEAEWISTGYIPTFEEYLENGKVSSAHRIATLQPILMLDVPFPPHVLQEIDFPSKFNDLAGSILRLRGDTRCYQNDRARGEEASCISCYMKDNPGSTEEDALNHINGMIEKQIKELNWELLKPDKNVPISSKKHAFNISRGLHHFYKYRDGYTVANSETRNLVIKTVLEPVPM.

The N-terminal 36 residues, 1–36 (MSVISIMPLASKPCLNKSFISSTHEPKALRRPISTV), are a transit peptide targeting the chloroplast. 3 residues coordinate Mg(2+): aspartate 378, aspartate 382, and aspartate 530. Positions 378-382 (DDMYD) match the DDXXD motif motif.

The protein belongs to the terpene synthase family. Tpsd subfamily. It depends on Mg(2+) as a cofactor. Mn(2+) serves as cofactor.

It is found in the plastid. The protein localises to the chloroplast. It carries out the reaction (2E)-geranyl diphosphate = (+)-car-3-ene + diphosphate. It participates in terpene metabolism; oleoresin biosynthesis. Functionally, terpene synthase (TPS) involved in defensive oleoresin formation in conifers in response to insect attack or other injury. The protein is Carene synthase, chloroplastic (3CAR) of Picea glauca (White spruce).